The primary structure comprises 284 residues: Shikimate dehydrogenase (NADP(+)) (284 aa).

Shikimate contacts are provided by residues 20 to 22 (SIS) and Ser67. Catalysis depends on Lys71, which acts as the Proton acceptor. Shikimate is bound by residues Asn92 and Asp107. Residues 129–133 (GAGGA) and Val227 each bind NADP(+). Tyr229 serves as a coordination point for shikimate. Gly250 serves as a coordination point for NADP(+).

It belongs to the shikimate dehydrogenase family. As to quaternary structure, homodimer.

The catalysed reaction is shikimate + NADP(+) = 3-dehydroshikimate + NADPH + H(+). It participates in metabolic intermediate biosynthesis; chorismate biosynthesis; chorismate from D-erythrose 4-phosphate and phosphoenolpyruvate: step 4/7. Involved in the biosynthesis of the chorismate, which leads to the biosynthesis of aromatic amino acids. Catalyzes the reversible NADPH linked reduction of 3-dehydroshikimate (DHSA) to yield shikimate (SA). The polypeptide is Shikimate dehydrogenase (NADP(+)) (Streptococcus sanguinis (strain SK36)).